A 448-amino-acid polypeptide reads, in one-letter code: MSLIVSDRFRIVVGLGKSGMSLVRFLANRGVSFAVADTRENPPELATLRRDYPQVEVRCGELDVDFLCRADELYVSPGLALATPALQQAHARGVKLSGDIELFARYAKAPVIAITGSNAKSTVTTLVGEMAVAAGKRVAVGGNLGTPALDLLSDDVELYVMELSSFQLETTDQLNAEVATVLNISEDHMDRYSGLPAYHLAKHRIFRGARQVVVNRQDALSRPLIGEGLPCWTFGLNKPDFHGFGLLEENGEKYLAFQFENLMPVRELKVRGAHNQANALAALALGHAVGLPFDAMLASLREFTGLEHRCQWLREHDGVHYYNDSKATNVGAALAAIEGLGSDIDGKLVLIAGGDGKGADFSALRAPVAEHCRAAVLLGRDAELIAQALGDAVTLVRVDTVQAAVEQSARLAQRGDAVLLSPACASLDMFKNYEERGRVFAQAVECLS.

An ATP-binding site is contributed by 116 to 122; that stretch reads GSNAKST.

The protein belongs to the MurCDEF family.

The protein resides in the cytoplasm. The catalysed reaction is UDP-N-acetyl-alpha-D-muramoyl-L-alanine + D-glutamate + ATP = UDP-N-acetyl-alpha-D-muramoyl-L-alanyl-D-glutamate + ADP + phosphate + H(+). It functions in the pathway cell wall biogenesis; peptidoglycan biosynthesis. Functionally, cell wall formation. Catalyzes the addition of glutamate to the nucleotide precursor UDP-N-acetylmuramoyl-L-alanine (UMA). The sequence is that of UDP-N-acetylmuramoylalanine--D-glutamate ligase from Pseudomonas savastanoi pv. phaseolicola (strain 1448A / Race 6) (Pseudomonas syringae pv. phaseolicola (strain 1448A / Race 6)).